Consider the following 150-residue polypeptide: Pyruvoyl-dependent arginine decarboxylase (150 aa).

Residue S42 is modified to Pyruvic acid (Ser).

The protein belongs to the PdaD family. Pyruvate is required as a cofactor.

It carries out the reaction L-arginine + H(+) = agmatine + CO2. The chain is Pyruvoyl-dependent arginine decarboxylase from Methanopyrus kandleri (strain AV19 / DSM 6324 / JCM 9639 / NBRC 100938).